The following is a 375-amino-acid chain: Succinyl-diaminopimelate desuccinylase (375 aa).

His-66 serves as a coordination point for Zn(2+). Residue Asp-68 is part of the active site. Asp-99 lines the Zn(2+) pocket. Glu-133 serves as the catalytic Proton acceptor. Residues Glu-134, Glu-162, and His-348 each contribute to the Zn(2+) site.

Belongs to the peptidase M20A family. DapE subfamily. As to quaternary structure, homodimer. Requires Zn(2+) as cofactor. Co(2+) is required as a cofactor.

The enzyme catalyses N-succinyl-(2S,6S)-2,6-diaminopimelate + H2O = (2S,6S)-2,6-diaminopimelate + succinate. It functions in the pathway amino-acid biosynthesis; L-lysine biosynthesis via DAP pathway; LL-2,6-diaminopimelate from (S)-tetrahydrodipicolinate (succinylase route): step 3/3. Catalyzes the hydrolysis of N-succinyl-L,L-diaminopimelic acid (SDAP), forming succinate and LL-2,6-diaminopimelate (DAP), an intermediate involved in the bacterial biosynthesis of lysine and meso-diaminopimelic acid, an essential component of bacterial cell walls. The sequence is that of Succinyl-diaminopimelate desuccinylase from Alkalilimnicola ehrlichii (strain ATCC BAA-1101 / DSM 17681 / MLHE-1).